The sequence spans 146 residues: Hemoglobin subunit beta (146 aa).

Val1 carries the N-acetylvaline modification. A Globin domain is found at 2–146 (HLTGEEKAAV…VANALAHKYH (145 aa)). Thr12 is modified (phosphothreonine). Ser44 carries the phosphoserine modification. Lys59 carries the post-translational modification N6-acetyllysine. His63 contacts heme b. Lys82 bears the N6-acetyllysine mark. A heme b-binding site is contributed by His92. The residue at position 93 (Cys93) is an S-nitrosocysteine. Residue Lys144 is modified to N6-acetyllysine.

This sequence belongs to the globin family. As to quaternary structure, heterotetramer of two alpha chains and two beta chains. In terms of tissue distribution, red blood cells.

Its function is as follows. Involved in oxygen transport from the lung to the various peripheral tissues. The chain is Hemoglobin subunit beta (HBB) from Lutra lutra (European river otter).